We begin with the raw amino-acid sequence, 161 residues long: Nucleotide-binding protein Bd0338 (161 aa).

It belongs to the YajQ family.

Its function is as follows. Nucleotide-binding protein. This Bdellovibrio bacteriovorus (strain ATCC 15356 / DSM 50701 / NCIMB 9529 / HD100) protein is Nucleotide-binding protein Bd0338.